The sequence spans 662 residues: DNA ligase (662 aa).

NAD(+) contacts are provided by residues 34 to 38, 83 to 84, and E113; these read DYDYD and SI. The active-site N6-AMP-lysine intermediate is the K115. 4 residues coordinate NAD(+): R136, E172, K286, and K310. Positions 404, 407, 422, and 427 each coordinate Zn(2+). Residues 583–662 form the BRCT domain; that stretch reads RASASCQGKT…SDLLKILYPN (80 aa).

Belongs to the NAD-dependent DNA ligase family. LigA subfamily. Mg(2+) is required as a cofactor. It depends on Mn(2+) as a cofactor.

It carries out the reaction NAD(+) + (deoxyribonucleotide)n-3'-hydroxyl + 5'-phospho-(deoxyribonucleotide)m = (deoxyribonucleotide)n+m + AMP + beta-nicotinamide D-nucleotide.. Functionally, DNA ligase that catalyzes the formation of phosphodiester linkages between 5'-phosphoryl and 3'-hydroxyl groups in double-stranded DNA using NAD as a coenzyme and as the energy source for the reaction. It is essential for DNA replication and repair of damaged DNA. In Chlamydia felis (strain Fe/C-56) (Chlamydophila felis), this protein is DNA ligase.